Here is a 142-residue protein sequence, read N- to C-terminus: Phosphoribosyl-AMP cyclohydrolase (142 aa).

Aspartate 85 serves as a coordination point for Mg(2+). Cysteine 86 lines the Zn(2+) pocket. Positions 87 and 89 each coordinate Mg(2+). Positions 102 and 109 each coordinate Zn(2+). The disordered stretch occupies residues 120–142 (GEPPTPVGAGERQPASGTADAAP).

This sequence belongs to the PRA-CH family. In terms of assembly, homodimer. Requires Mg(2+) as cofactor. It depends on Zn(2+) as a cofactor.

Its subcellular location is the cytoplasm. The enzyme catalyses 1-(5-phospho-beta-D-ribosyl)-5'-AMP + H2O = 1-(5-phospho-beta-D-ribosyl)-5-[(5-phospho-beta-D-ribosylamino)methylideneamino]imidazole-4-carboxamide. It functions in the pathway amino-acid biosynthesis; L-histidine biosynthesis; L-histidine from 5-phospho-alpha-D-ribose 1-diphosphate: step 3/9. In terms of biological role, catalyzes the hydrolysis of the adenine ring of phosphoribosyl-AMP. The polypeptide is Phosphoribosyl-AMP cyclohydrolase (Acidothermus cellulolyticus (strain ATCC 43068 / DSM 8971 / 11B)).